The sequence spans 220 residues: Octanoyltransferase (220 aa).

Positions 27–208 (PGTADEIWLC…QLARAHGQAV (182 aa)) constitute a BPL/LPL catalytic domain. Substrate contacts are provided by residues 66–73 (RGGQVTYH), 139–141 (ALG), and 152–154 (GLA). Residue Cys170 is the Acyl-thioester intermediate of the active site.

It belongs to the LipB family.

Its subcellular location is the cytoplasm. The enzyme catalyses octanoyl-[ACP] + L-lysyl-[protein] = N(6)-octanoyl-L-lysyl-[protein] + holo-[ACP] + H(+). It participates in protein modification; protein lipoylation via endogenous pathway; protein N(6)-(lipoyl)lysine from octanoyl-[acyl-carrier-protein]: step 1/2. In terms of biological role, catalyzes the transfer of endogenously produced octanoic acid from octanoyl-acyl-carrier-protein onto the lipoyl domains of lipoate-dependent enzymes. Lipoyl-ACP can also act as a substrate although octanoyl-ACP is likely to be the physiological substrate. The polypeptide is Octanoyltransferase (Bordetella bronchiseptica (strain ATCC BAA-588 / NCTC 13252 / RB50) (Alcaligenes bronchisepticus)).